A 102-amino-acid chain; its full sequence is Urease subunit beta (102 aa).

It belongs to the urease beta subunit family. As to quaternary structure, heterotrimer of UreA (gamma), UreB (beta) and UreC (alpha) subunits. Three heterotrimers associate to form the active enzyme.

The protein resides in the cytoplasm. The enzyme catalyses urea + 2 H2O + H(+) = hydrogencarbonate + 2 NH4(+). It functions in the pathway nitrogen metabolism; urea degradation; CO(2) and NH(3) from urea (urease route): step 1/1. This chain is Urease subunit beta, found in Bordetella parapertussis (strain 12822 / ATCC BAA-587 / NCTC 13253).